We begin with the raw amino-acid sequence, 130 residues long: Small ribosomal subunit protein uS9 (130 aa).

Positions 109–130 (RMKERRKYGLKKARKAPQFSKR) are disordered. A compositionally biased stretch (basic residues) spans 111–130 (KERRKYGLKKARKAPQFSKR).

Belongs to the universal ribosomal protein uS9 family.

The protein is Small ribosomal subunit protein uS9 of Caldanaerobacter subterraneus subsp. tengcongensis (strain DSM 15242 / JCM 11007 / NBRC 100824 / MB4) (Thermoanaerobacter tengcongensis).